Consider the following 463-residue polypeptide: Interstitial collagenase B (463 aa).

Positions 1–17 are cleaved as a signal peptide; that stretch reads MPSLPLLLRLWAASSYS. Residues 18–96 constitute a propeptide, activation peptide; sequence FPVIQDGLQK…PRCGVPDVAP (79 aa). Residues 87–94 carry the Cysteine switch motif; sequence PRCGVPDV. Position 89 (Cys89) interacts with Zn(2+). A metalloprotease region spans residues 95–273; it reads APYAITHNNP…PIQLTDATLD (179 aa). Position 155 (Asp155) interacts with Ca(2+). The Zn(2+) site is built by His165 and Asp167. Residues Asp172 and Gly173 each contribute to the Ca(2+) site. Position 180 (His180) interacts with Zn(2+). Ca(2+)-binding residues include Gly187 and Gly189. His193 contacts Zn(2+). Asp195 is a Ca(2+) binding site. His215 contributes to the Zn(2+) binding site. Glu216 is an active-site residue. His219 and His225 together coordinate Zn(2+). Cys275 and Cys463 are joined by a disulfide. 2 Hemopexin repeats span residues 278 to 321 and 322 to 368; these read GLTF…WPNL and PGKF…FGFP. A Ca(2+)-binding site is contributed by Asp282. N-linked (GlcNAc...) asparagine glycosylation is present at Asn370. Hemopexin repeat units follow at residues 371-419 and 420-463; these read VTNI…FPGI and DYKV…WFNC. 2 residues coordinate Ca(2+): Asp375 and Asp424.

Belongs to the peptidase M10A family. Ca(2+) serves as cofactor. Requires Zn(2+) as cofactor.

It localises to the secreted. The protein localises to the extracellular space. It is found in the extracellular matrix. The catalysed reaction is Cleavage of the triple helix of collagen at about three-quarters of the length of the molecule from the N-terminus, at 775-Gly-|-Ile-776 in the alpha1(I) chain. Cleaves synthetic substrates and alpha-macroglobulins at bonds where P1' is a hydrophobic residue.. Its activity is regulated as follows. Can be activated without removal of the activation peptide. The protein is Interstitial collagenase B (Mmp1b) of Mus musculus (Mouse).